Consider the following 240-residue polypeptide: Sugar fermentation stimulation protein homolog (240 aa).

This sequence belongs to the SfsA family.

This chain is Sugar fermentation stimulation protein homolog, found in Methanothermobacter thermautotrophicus (strain ATCC 29096 / DSM 1053 / JCM 10044 / NBRC 100330 / Delta H) (Methanobacterium thermoautotrophicum).